The following is a 61-amino-acid chain: Short neurotoxin 2 (61 aa).

4 disulfides stabilise this stretch: cysteine 3–cysteine 23, cysteine 17–cysteine 40, cysteine 42–cysteine 53, and cysteine 54–cysteine 59.

This sequence belongs to the three-finger toxin family. Short-chain subfamily. Type I alpha-neurotoxin sub-subfamily. As to expression, expressed by the venom gland.

It localises to the secreted. In terms of biological role, binds to muscle nicotinic acetylcholine receptor (nAChR) and inhibit acetylcholine from binding to the receptor, thereby impairing neuromuscular transmission. The protein is Short neurotoxin 2 of Naja annulifera (Banded Egyptian cobra).